We begin with the raw amino-acid sequence, 173 residues long: SKP1-like protein 1 (173 aa).

The interval 115–173 (ILAANYLNIKGLLDLTCQTVADMIKGKTPEEIRKTFNIKNDFTPEEEEEIRRENQWAFE) is interaction with the F-box domain of F-box proteins.

This sequence belongs to the SKP1 family. Part of a SCF (SKP1-CUL1-F-box protein) E3 ubiquitin-protein ligase complex. Interacts directly with MOF (via F-box domain). Interacts with rice black streaked dwarf virus RBSDV protein P7-2. Is able to form the SCF complex together with CUL1 and the viral P7-2 protein. Interacts with D3.

The protein localises to the nucleus. It functions in the pathway protein modification; protein ubiquitination. Functionally, involved in ubiquitination and subsequent proteasomal degradation of target proteins. Together with CUL1, a RING-box and a F-box protein, it forms a SCF E3 ubiquitin ligase complex. The functional specificity of this complex depends on the type of F-box protein. In the SCF complex, it serves as an adapter that links the F-box protein to CUL1. The polypeptide is SKP1-like protein 1 (Oryza sativa subsp. japonica (Rice)).